A 340-amino-acid polypeptide reads, in one-letter code: N-acetyl-gamma-glutamyl-phosphate reductase (340 aa).

Cys-146 is an active-site residue.

The protein belongs to the NAGSA dehydrogenase family. Type 1 subfamily.

The protein resides in the cytoplasm. The enzyme catalyses N-acetyl-L-glutamate 5-semialdehyde + phosphate + NADP(+) = N-acetyl-L-glutamyl 5-phosphate + NADPH + H(+). Its pathway is amino-acid biosynthesis; L-arginine biosynthesis; N(2)-acetyl-L-ornithine from L-glutamate: step 3/4. Its function is as follows. Catalyzes the NADPH-dependent reduction of N-acetyl-5-glutamyl phosphate to yield N-acetyl-L-glutamate 5-semialdehyde. This chain is N-acetyl-gamma-glutamyl-phosphate reductase, found in Streptococcus thermophilus (strain CNRZ 1066).